The chain runs to 369 residues: MRLLDTATPSVSSIPIAPHATQPTETAMTITAQEALTRCIEHREIFHDEMLHLMRQIMQAQISPVMAAAILTGLRVKKETIGEISAAAQVMREFANKVEVTDRENFVDIVGTGGDGSHTFNISTASMFVAAAAGAKIAKHGNRGVSSKSGSADVLEALGVNIMLTPEQVGQCIAQTGIGFMFAPTHHPAMKNVAPIRKEMGVRTIFNILGPLTNPADAPNILMGVFHPDLVGIQVRVMQRLGAKHALVVYGKDGMDEVSLGAATLVGELKDGEVREYEIHPEDFGLSMISNRGLKVADAVESKAMLLEALGNVPGTPREIVSLNAGTALYAANVADSIEDGIRRAREAIASGAAREKLDHFVRATQQFK.

5-phospho-alpha-D-ribose 1-diphosphate-binding positions include G111, 114-115 (GD), T119, 121-124 (NIST), 139-147 (KHGNRGVSS), and S151. Residue G111 coordinates anthranilate. Mg(2+) is bound at residue S123. Residue N142 coordinates anthranilate. R197 contributes to the anthranilate binding site. Mg(2+) contacts are provided by D256 and E257.

Belongs to the anthranilate phosphoribosyltransferase family. As to quaternary structure, homodimer. It depends on Mg(2+) as a cofactor.

The enzyme catalyses N-(5-phospho-beta-D-ribosyl)anthranilate + diphosphate = 5-phospho-alpha-D-ribose 1-diphosphate + anthranilate. It participates in amino-acid biosynthesis; L-tryptophan biosynthesis; L-tryptophan from chorismate: step 2/5. In terms of biological role, catalyzes the transfer of the phosphoribosyl group of 5-phosphorylribose-1-pyrophosphate (PRPP) to anthranilate to yield N-(5'-phosphoribosyl)-anthranilate (PRA). The sequence is that of Anthranilate phosphoribosyltransferase from Cupriavidus pinatubonensis (strain JMP 134 / LMG 1197) (Cupriavidus necator (strain JMP 134)).